The chain runs to 316 residues: Protease HtpX homolog (316 aa).

The chain crosses the membrane as a helical span at residues 16 to 36 (LFMGAGFLIGGATGMMIALVF). H134 contributes to the Zn(2+) binding site. Residue E135 is part of the active site. H138 is a Zn(2+) binding site. The next 2 membrane-spanning stretches (helical) occupy residues 149–169 (VTAT…FFGG) and 180–200 (LGGM…AMLV). Residue E209 coordinates Zn(2+). A disordered region spans residues 295–316 (PVMAATTSSSVPLSGERGGPWS).

Belongs to the peptidase M48B family. Zn(2+) is required as a cofactor.

The protein localises to the cell inner membrane. The chain is Protease HtpX homolog from Caulobacter vibrioides (strain ATCC 19089 / CIP 103742 / CB 15) (Caulobacter crescentus).